The following is an 837-amino-acid chain: Granulocyte colony-stimulating factor receptor (837 aa).

The N-terminal stretch at 1-25 is a signal peptide; the sequence is MVGLGACTLTGVTLIFLLLPRSLES. Intrachain disulfides connect Cys-26–Cys-52 and Cys-46–Cys-102. An Ig-like C2-type domain is found at 26 to 118; it reads CGHIEISPPV…SVQLLDQAEL (93 aa). The Extracellular portion of the chain corresponds to 26–626; sequence CGHIEISPPV…LTLRTLDPSD (601 aa). N-linked (GlcNAc...) asparagine glycans are attached at residues Asn-51, Asn-94, and Asn-129. 5 Fibronectin type-III domains span residues 126–231, 236–331, 334–433, 434–529, and 530–624; these read SPSN…LEPP, LDIG…LRPT, APTI…NEGP, AVTG…GERA, and PPHA…TLDP. Cystine bridges form between Cys-132–Cys-143, Cys-168–Cys-219, Cys-178–Cys-187, Cys-249–Cys-296, and Cys-267–Cys-310. 2 N-linked (GlcNAc...) asparagine glycosylation sites follow: Asn-186 and Asn-279. Residues 319–323 carry the WSXWS motif motif; the sequence is WSPWS. N-linked (GlcNAc...) asparagine glycans are attached at residues Asn-392, Asn-408, Asn-474, Asn-487, Asn-582, and Asn-613. Residues 627–650 form a helical membrane-spanning segment; the sequence is LNIFLGILCLVLLSTTCVVTWLCC. Residues 651–837 lie on the Cytoplasmic side of the membrane; it reads KRRGKTSFWS…VHGVEEQGGF (187 aa). The Box 1 motif motif lies at 658–666; the sequence is FWSDVPDPA.

It belongs to the type I cytokine receptor family. Type 2 subfamily. As to quaternary structure, homodimer. The dimeric receptor binds two CSF3 molecules. Interacts with CEACAM1; down-regulates the CSF3R-STAT3 pathway through recruitment of PTPN6 that dephosphorylates CSF3R. In terms of processing, N-glycosylated. Found in bone marrow.

The protein resides in the membrane. Its function is as follows. Receptor for granulocyte colony-stimulating factor (CSF3). In addition it may function in some adhesion or recognition events at the cell surface. This chain is Granulocyte colony-stimulating factor receptor (Csf3r), found in Mus musculus (Mouse).